The primary structure comprises 351 residues: Anthranilate phosphoribosyltransferase (351 aa).

5-phospho-alpha-D-ribose 1-diphosphate contacts are provided by residues glycine 90, 93–94 (GD), threonine 98, 100–103 (NIST), 118–126 (KHGNRSASG), and serine 130. Glycine 90 provides a ligand contact to anthranilate. Residue serine 102 participates in Mg(2+) binding. Asparagine 121 is a binding site for anthranilate. Position 176 (arginine 176) interacts with anthranilate. Mg(2+) contacts are provided by aspartate 235 and glutamate 236.

It belongs to the anthranilate phosphoribosyltransferase family. Homodimer. Mg(2+) is required as a cofactor.

The catalysed reaction is N-(5-phospho-beta-D-ribosyl)anthranilate + diphosphate = 5-phospho-alpha-D-ribose 1-diphosphate + anthranilate. It participates in amino-acid biosynthesis; L-tryptophan biosynthesis; L-tryptophan from chorismate: step 2/5. Functionally, catalyzes the transfer of the phosphoribosyl group of 5-phosphorylribose-1-pyrophosphate (PRPP) to anthranilate to yield N-(5'-phosphoribosyl)-anthranilate (PRA). The protein is Anthranilate phosphoribosyltransferase of Prochlorococcus marinus (strain MIT 9313).